The primary structure comprises 250 residues: 2,3-bisphosphoglycerate-dependent phosphoglycerate mutase (250 aa).

Substrate-binding positions include 10–17, 23–24, Arg62, 89–92, Lys100, 116–117, and 185–186; these read RHGESQWN, TG, ERHY, RR, and GN. His11 acts as the Tele-phosphohistidine intermediate in catalysis. The active-site Proton donor/acceptor is the Glu89.

Belongs to the phosphoglycerate mutase family. BPG-dependent PGAM subfamily. As to quaternary structure, homodimer.

The enzyme catalyses (2R)-2-phosphoglycerate = (2R)-3-phosphoglycerate. It participates in carbohydrate degradation; glycolysis; pyruvate from D-glyceraldehyde 3-phosphate: step 3/5. Its function is as follows. Catalyzes the interconversion of 2-phosphoglycerate and 3-phosphoglycerate. This Citrobacter koseri (strain ATCC BAA-895 / CDC 4225-83 / SGSC4696) protein is 2,3-bisphosphoglycerate-dependent phosphoglycerate mutase.